A 1047-amino-acid polypeptide reads, in one-letter code: tRNA wybutosine-synthesizing protein 4 (1047 aa).

S-adenosyl-L-methionine-binding positions include R69, G95, D122, 169–170, and E196; that span reads DL. The region spanning 814–1003 is the JmjC domain; it reads GRQYLRSISA…AAGRDVYGNR (190 aa).

The protein belongs to the methyltransferase superfamily. LCMT family.

The enzyme catalyses 7-[(3S)-3-amino-3-carboxypropyl]wyosine(37) in tRNA(Phe) + S-adenosyl-L-methionine = 7-[(3S)-(3-amino-3-methoxycarbonyl)propyl]wyosine(37) in tRNA(Phe) + S-adenosyl-L-homocysteine. It carries out the reaction 7-[(3S)-(3-amino-3-methoxycarbonyl)propyl]wyosine(37) in tRNA(Phe) + S-adenosyl-L-methionine + CO2 = wybutosine(37) in tRNA(Phe) + S-adenosyl-L-homocysteine + 2 H(+). It participates in tRNA modification; wybutosine-tRNA(Phe) biosynthesis. Its function is as follows. Probable S-adenosyl-L-methionine-dependent methyltransferase that acts as a component of the wybutosine biosynthesis pathway. Wybutosine is a hyper modified guanosine with a tricyclic base found at the 3'-position adjacent to the anticodon of eukaryotic phenylalanine tRNA. May methylate the carboxyl group of leucine residues to form alpha-leucine ester residues. The polypeptide is tRNA wybutosine-synthesizing protein 4 (ppm2) (Aspergillus fumigatus (strain ATCC MYA-4609 / CBS 101355 / FGSC A1100 / Af293) (Neosartorya fumigata)).